The sequence spans 1457 residues: Eye-specific diacylglycerol kinase (1457 aa).

Disordered regions lie at residues 1–123 (MQQQ…SSEA), 136–177 (RSHS…PPCI), and 207–339 (YSNT…QPTT). Composition is skewed to low complexity over residues 22–62 (SATT…LRTT), 98–115 (SQRASSSLLKQQSSSSAS), and 141–154 (DSATASAGSDDSGT). Acidic residues predominate over residues 214 to 253 (ASEDEDEVEGHNAEEEEEGSAAIEDAEEETTEAATEEADE). A compositionally biased stretch (basic and acidic residues) spans 254–266 (DPRTEVESEHDHD). Residues 294–303 (RLPRQMRRHT) show a composition bias toward basic residues. 2 consecutive Phorbol-ester/DAG-type zinc fingers follow at residues 591–641 (HYWK…TLAC) and 661–724 (HHWV…GEEC). Positions 758–799 (NNAASGSGGGGAGGGAGGGGGKSKKQTQRRQKGKEEKKEPRA) are disordered. The span at 763-778 (GSGGGGAGGGAGGGGG) shows a compositional bias: gly residues. Residues 779 to 789 (KSKKQTQRRQK) are compositionally biased toward basic residues. The 137-residue stretch at 808-944 (PEVIPVIVFI…MDRWRVKVTP (137 aa)) folds into the DAGKc domain. The segment at 1264–1302 (TPDQERSFAAFSQRQAQNERRQMDQAQGRGPGSTDEDLQ) is disordered. ANK repeat units follow at residues 1320–1349 (QTSDAILLAAQSGDLNMLRALHEQGYSLQS), 1353–1382 (NGQTALHFACKYNHRDIVKYIIASATRRLI), 1389–1418 (LGQTALHIAAEQNRRDICVMLVAAGAHLDT), and 1422–1451 (GGNTPMMVAFNKNANEIATYLESKQGTQPV).

This sequence belongs to the eukaryotic diacylglycerol kinase family. As to expression, expressed specifically in adult eye.

The protein localises to the membrane. The catalysed reaction is a 1,2-diacyl-sn-glycerol + ATP = a 1,2-diacyl-sn-glycero-3-phosphate + ADP + H(+). Functionally, required for the maintenance of phospholipid turnover within the photoreceptor. The chain is Eye-specific diacylglycerol kinase (rdgA) from Drosophila melanogaster (Fruit fly).